The primary structure comprises 122 residues: Large ribosomal subunit protein eL18 (122 aa).

It belongs to the eukaryotic ribosomal protein eL18 family.

The chain is Large ribosomal subunit protein eL18 from Pyrobaculum aerophilum (strain ATCC 51768 / DSM 7523 / JCM 9630 / CIP 104966 / NBRC 100827 / IM2).